The primary structure comprises 423 residues: Sphingomyelin phosphodiesterase 2 (423 aa).

Residue glutamate 49 coordinates Mg(2+). Catalysis depends on histidine 272, which acts as the Proton acceptor. Transmembrane regions (helical) follow at residues 330–350 (VIGL…GGGA) and 354–374 (AILL…FYLF). Residues 400-423 (QDLGPEPQPALLLGQQEGDRTKEQ) are disordered.

The protein belongs to the neutral sphingomyelinase family. Requires Mg(2+) as cofactor.

The protein localises to the cell membrane. It catalyses the reaction a sphingomyelin + H2O = phosphocholine + an N-acylsphing-4-enine + H(+). The enzyme catalyses an N-(acyl)-sphingosylphosphocholine + H2O = an N-acyl-sphingoid base + phosphocholine + H(+). The catalysed reaction is 1-O-octadecyl-sn-glycero-3-phosphocholine + H2O = 1-O-octadecyl-sn-glycerol + phosphocholine + H(+). It carries out the reaction 1-O-hexadecyl-sn-glycero-3-phosphocholine + H2O = 1-O-hexadecyl-sn-glycerol + phosphocholine + H(+). It catalyses the reaction 1-hexadecanoyl-sn-glycero-3-phosphocholine + H2O = 1-hexadecanoyl-sn-glycerol + phosphocholine + H(+). The enzyme catalyses a sphingosylphosphocholine + H2O = a sphingoid base + phosphocholine + H(+). The protein operates within lipid metabolism; sphingolipid metabolism. Catalyzes, at least in vitro, the hydrolysis of sphingomyelin to form ceramide and phosphocholine. Also hydrolyzes 1-O-alkyl-2-lyso-sn-glycero-3-phosphocholine (lyso-platelet-activating factor) in vivo. Also acts on 1-acyl-2-lyso-sn-glycero-3-phosphocholine (lyso-PC) and sphingosylphosphocholine. This Homo sapiens (Human) protein is Sphingomyelin phosphodiesterase 2.